We begin with the raw amino-acid sequence, 150 residues long: MYCPFCQHDHSKVIDSRVIDAGSAIRRRRECSKCEGRFTTIEKAVLLVVKRNGVTEPFSREKVVTGVRRACQGRDVSDDALKRLAQQVEETVRSNGSSQVRANDIGLAILDPLRELDEVAYLRFASVYKSFDSADDFEKEIRLMRRRGRD.

A zinc finger lies at 3-34 (CPFCQHDHSKVIDSRVIDAGSAIRRRRECSKC). The 91-residue stretch at 46 to 136 (LLVVKRNGVT…VYKSFDSADD (91 aa)) folds into the ATP-cone domain.

It belongs to the NrdR family. Zn(2+) is required as a cofactor.

Negatively regulates transcription of bacterial ribonucleotide reductase nrd genes and operons by binding to NrdR-boxes. The sequence is that of Transcriptional repressor NrdR from Corynebacterium glutamicum (strain ATCC 13032 / DSM 20300 / JCM 1318 / BCRC 11384 / CCUG 27702 / LMG 3730 / NBRC 12168 / NCIMB 10025 / NRRL B-2784 / 534).